The sequence spans 320 residues: ATP-dependent 6-phosphofructokinase (320 aa).

Gly-12 provides a ligand contact to ATP. ADP-binding positions include 22–26 and 55–60; these read RGVVR and RYSVSD. ATP contacts are provided by residues 73-74 and 103-106; these read RF and GDGS. Asp-104 provides a ligand contact to Mg(2+). 126-128 is a substrate binding site; the sequence is TID. The active-site Proton acceptor is the Asp-128. Arg-155 lines the ADP pocket. Substrate-binding positions include Arg-163 and 170-172; that span reads MGR. ADP-binding positions include 186–188, Lys-212, and 214–216; these read GCE and KKH. Substrate is bound by residues Glu-223, Arg-244, and 250-253; that span reads HIQR.

The protein belongs to the phosphofructokinase type A (PFKA) family. ATP-dependent PFK group I subfamily. Prokaryotic clade 'B1' sub-subfamily. Homotetramer. Mg(2+) serves as cofactor.

Its subcellular location is the cytoplasm. The catalysed reaction is beta-D-fructose 6-phosphate + ATP = beta-D-fructose 1,6-bisphosphate + ADP + H(+). The protein operates within carbohydrate degradation; glycolysis; D-glyceraldehyde 3-phosphate and glycerone phosphate from D-glucose: step 3/4. With respect to regulation, allosterically activated by ADP and other diphosphonucleosides, and allosterically inhibited by phosphoenolpyruvate. Functionally, catalyzes the phosphorylation of D-fructose 6-phosphate to fructose 1,6-bisphosphate by ATP, the first committing step of glycolysis. This chain is ATP-dependent 6-phosphofructokinase, found in Cronobacter sakazakii (strain ATCC BAA-894) (Enterobacter sakazakii).